Consider the following 567-residue polypeptide: Beta-galactoside-specific lectin 2 (567 aa).

Positions 1–33 are cleaved as a signal peptide; sequence MNARLASSRAWVWCFLMVGLVCGATAKAESKIN. N-linked (GlcNAc...) asparagine glycosylation is present at Asn145. Glu198 is a catalytic residue. Intrachain disulfides connect Cys280-Cys306 and Cys322-Cys341. A propeptide spans 288–301 (connecting peptide); the sequence is DVHNWPLVIRPVMV. The Ricin B-type lectin 1 domain maps to 309–439; it reads SEPTVRIVGR…DSLGQSWLAS (131 aa). Residue 324 to 326 coordinates D-galactose; it reads DVR. N-linked (GlcNAc...) asparagine glycosylation is present at Asn362. Residues Cys365 and Cys382 are joined by a disulfide bond. Residue Asn440 is glycosylated (N-linked (GlcNAc...) asparagine). Residues 443 to 566 form the Ricin B-type lectin 2 domain; that stretch reads APREVTIYGF…GNPNQMWLPV (124 aa). Disulfide bonds link Cys456–Cys469 and Cys495–Cys512. 539-541 serves as a coordination point for D-galactose; the sequence is DVR.

It belongs to the ribosome-inactivating protein family. Type 2 RIP subfamily. In terms of assembly, disulfide-linked dimer of A and B chains.

It carries out the reaction Endohydrolysis of the N-glycosidic bond at one specific adenosine on the 28S rRNA.. Its function is as follows. The A chain is responsible for inhibiting protein synthesis through the catalytic inactivation of 60S ribosomal subunits by removing adenine from position 4,324 of 28S rRNA. The B chain binds to cell receptors and probably facilitates the entry into the cell of the A chain; B chains are also responsible for cell agglutination (lectin activity). This is Beta-galactoside-specific lectin 2 from Viscum album (European mistletoe).